Consider the following 356-residue polypeptide: Alanine racemase, catabolic (356 aa).

The Proton acceptor; specific for D-alanine role is filled by Lys35. Lys35 bears the N6-(pyridoxal phosphate)lysine mark. Arg130 lines the substrate pocket. Tyr253 serves as the catalytic Proton acceptor; specific for L-alanine. Met301 contributes to the substrate binding site.

This sequence belongs to the alanine racemase family. In terms of assembly, monomer. Pyridoxal 5'-phosphate serves as cofactor.

It carries out the reaction L-alanine = D-alanine. With respect to regulation, inactivated by D- and L-beta-fluoroalanine, D- and L-beta-chloroalanine, and O-acetyl-D-serine. Isomerizes L-alanine to D-alanine which is then oxidized to pyruvate by DadA. This chain is Alanine racemase, catabolic (dadX), found in Salmonella typhimurium (strain LT2 / SGSC1412 / ATCC 700720).